A 738-amino-acid polypeptide reads, in one-letter code: uncharacterized protein (738 aa).

Polar residues-rich tracts occupy residues 1-34 (MSSSSKDSSFQVETPVQNILETSTNSELQDQVSS), 140-169 (TSSDFQSKDSLSTTQPSVSGGNGSTSQSPP), and 177-197 (KPFSISNEPVEQETENSSTKD). 2 disordered regions span residues 1-51 (MSSS…AASI) and 140-197 (TSSD…STKD). One can recognise an RRM domain in the interval 363 to 434 (SRLFLGHLNT…QKLHLEISKI (72 aa)). A disordered region spans residues 466-487 (YPTSSRKRTRSPLMSKGKSYDR).

This is an uncharacterized protein from Schizosaccharomyces pombe (strain 972 / ATCC 24843) (Fission yeast).